We begin with the raw amino-acid sequence, 95 residues long: Ferredoxin-like protein FixX (95 aa).

Belongs to the bacterial-type ferredoxin family. FixX subfamily.

Its function is as follows. Could be part of an electron transfer system required for anaerobic carnitine reduction. Could be a 3Fe-4S cluster-containing protein. The polypeptide is Ferredoxin-like protein FixX (fixX) (Salmonella typhimurium (strain LT2 / SGSC1412 / ATCC 700720)).